We begin with the raw amino-acid sequence, 256 residues long: Imidazole glycerol phosphate synthase subunit HisF (256 aa).

Catalysis depends on residues Asp11 and Asp130.

This sequence belongs to the HisA/HisF family. In terms of assembly, heterodimer of HisH and HisF.

The protein localises to the cytoplasm. It catalyses the reaction 5-[(5-phospho-1-deoxy-D-ribulos-1-ylimino)methylamino]-1-(5-phospho-beta-D-ribosyl)imidazole-4-carboxamide + L-glutamine = D-erythro-1-(imidazol-4-yl)glycerol 3-phosphate + 5-amino-1-(5-phospho-beta-D-ribosyl)imidazole-4-carboxamide + L-glutamate + H(+). It functions in the pathway amino-acid biosynthesis; L-histidine biosynthesis; L-histidine from 5-phospho-alpha-D-ribose 1-diphosphate: step 5/9. In terms of biological role, IGPS catalyzes the conversion of PRFAR and glutamine to IGP, AICAR and glutamate. The HisF subunit catalyzes the cyclization activity that produces IGP and AICAR from PRFAR using the ammonia provided by the HisH subunit. This Prochlorococcus marinus (strain MIT 9312) protein is Imidazole glycerol phosphate synthase subunit HisF.